The following is a 198-amino-acid chain: Ribonuclease HII (198 aa).

Positions 3–198 constitute an RNase H type-2 domain; the sequence is LSVGGIDEAG…SWETVGKLFK (196 aa). Residues aspartate 9, glutamate 10, and aspartate 104 each coordinate a divalent metal cation.

It belongs to the RNase HII family. It depends on Mn(2+) as a cofactor. Mg(2+) is required as a cofactor.

It is found in the cytoplasm. It catalyses the reaction Endonucleolytic cleavage to 5'-phosphomonoester.. Its function is as follows. Endonuclease that specifically degrades the RNA of RNA-DNA hybrids. The chain is Ribonuclease HII from Pyrobaculum arsenaticum (strain DSM 13514 / JCM 11321 / PZ6).